The primary structure comprises 175 residues: Translation initiation factor IF-3 (175 aa).

This sequence belongs to the IF-3 family. Monomer.

It is found in the cytoplasm. IF-3 binds to the 30S ribosomal subunit and shifts the equilibrium between 70S ribosomes and their 50S and 30S subunits in favor of the free subunits, thus enhancing the availability of 30S subunits on which protein synthesis initiation begins. In Chlamydia trachomatis serovar D (strain ATCC VR-885 / DSM 19411 / UW-3/Cx), this protein is Translation initiation factor IF-3.